The sequence spans 192 residues: Transposon Tn552 DNA-invertase BinR (192 aa).

The 136-residue stretch at 1–136 (MKIGYARVST…AGRIAARARG (136 aa)) folds into the Resolvase/invertase-type recombinase catalytic domain. Serine 9 (O-(5'-phospho-DNA)-serine intermediate) is an active-site residue. Residues 163–182 (IKTIAEQWKVSRTTIYRYLN) constitute a DNA-binding region (H-T-H motif).

The protein belongs to the site-specific recombinase resolvase family.

DNA-invertase, mediating the inversion of inv. In Staphylococcus aureus, this protein is Transposon Tn552 DNA-invertase BinR (resR).